The chain runs to 955 residues: UPF0182 protein tll1193 (955 aa).

9 helical membrane-spanning segments follow: residues Val6–Leu26, Trp53–Cys73, Gly98–Ala118, Trp163–Phe183, Leu186–Leu206, Leu240–Ala260, Leu280–Tyr300, Leu324–Ile344, and Gly354–Val374.

It belongs to the UPF0182 family.

It is found in the cell membrane. The chain is UPF0182 protein tll1193 from Thermosynechococcus vestitus (strain NIES-2133 / IAM M-273 / BP-1).